We begin with the raw amino-acid sequence, 157 residues long: Probable succinate transporter subunit YjjB (157 aa).

4 helical membrane passes run 8 to 28 (FALA…AMVF), 50 to 70 (MILM…SMLV), 87 to 107 (VFTV…TAMI), and 129 to 149 (FLTA…PGLW).

This sequence belongs to the ThrE exporter (TC 2.A.79) family. The transporter is composed of YjjB and YjjP.

It is found in the cell inner membrane. Involved in succinate export with YjjP. Both proteins are required for export. This chain is Probable succinate transporter subunit YjjB, found in Escherichia coli (strain SE11).